Reading from the N-terminus, the 85-residue chain is Translation initiation factor IF-1 (85 aa).

The 72-residue stretch at 1–72 folds into the S1-like domain; that stretch reads MAKEELLEMR…TKARITYRFM (72 aa).

It belongs to the IF-1 family. In terms of assembly, component of the 30S ribosomal translation pre-initiation complex which assembles on the 30S ribosome in the order IF-2 and IF-3, IF-1 and N-formylmethionyl-tRNA(fMet); mRNA recruitment can occur at any time during PIC assembly.

Its subcellular location is the cytoplasm. Its function is as follows. One of the essential components for the initiation of protein synthesis. Stabilizes the binding of IF-2 and IF-3 on the 30S subunit to which N-formylmethionyl-tRNA(fMet) subsequently binds. Helps modulate mRNA selection, yielding the 30S pre-initiation complex (PIC). Upon addition of the 50S ribosomal subunit IF-1, IF-2 and IF-3 are released leaving the mature 70S translation initiation complex. In Erythrobacter litoralis (strain HTCC2594), this protein is Translation initiation factor IF-1.